We begin with the raw amino-acid sequence, 135 residues long: Histone H1, macronuclear (135 aa).

Over residues 1-17 (MPAKTATAVKRTTTTKK) the composition is skewed to low complexity. Positions 1–135 (MPAKTATAVK…GGKKKSAKKN (135 aa)) are disordered. Basic residues-rich tracts occupy residues 18–54 (SAAKRKTSKAVKKAGKRTQSKAKGAQKVKKAATRRTP) and 62–79 (KATKKAGARKASTKRSAT). Over residues 80-112 (KKTTAAPAAAAAPATDAPAAAATPSKATGSAKK) the composition is skewed to low complexity. A compositionally biased stretch (basic residues) spans 113–135 (ASARKSSAKKPAKGGKKKSAKKN).

It localises to the nucleus. It is found in the chromosome. In terms of biological role, histones H1 are necessary for the condensation of nucleosome chains into higher-order structures. This is Histone H1, macronuclear from Euplotes eurystomus (Ciliate).